Here is a 362-residue protein sequence, read N- to C-terminus: 3-dehydroquinate synthase (362 aa).

NAD(+) is bound by residues 71–76, 105–109, 129–130, K142, K151, and 169–172; these read DGEQYK, GVVGD, TT, and CLKT. Zn(2+) contacts are provided by E184, H247, and H264.

It belongs to the sugar phosphate cyclases superfamily. Dehydroquinate synthase family. It depends on Co(2+) as a cofactor. Zn(2+) is required as a cofactor. The cofactor is NAD(+).

The protein localises to the cytoplasm. It catalyses the reaction 7-phospho-2-dehydro-3-deoxy-D-arabino-heptonate = 3-dehydroquinate + phosphate. The protein operates within metabolic intermediate biosynthesis; chorismate biosynthesis; chorismate from D-erythrose 4-phosphate and phosphoenolpyruvate: step 2/7. In terms of biological role, catalyzes the conversion of 3-deoxy-D-arabino-heptulosonate 7-phosphate (DAHP) to dehydroquinate (DHQ). The sequence is that of 3-dehydroquinate synthase from Escherichia coli O127:H6 (strain E2348/69 / EPEC).